Reading from the N-terminus, the 183-residue chain is Probable chemoreceptor glutamine deamidase CheD (183 aa).

It belongs to the CheD family.

The catalysed reaction is L-glutaminyl-[protein] + H2O = L-glutamyl-[protein] + NH4(+). In terms of biological role, probably deamidates glutamine residues to glutamate on methyl-accepting chemotaxis receptors (MCPs), playing an important role in chemotaxis. The polypeptide is Probable chemoreceptor glutamine deamidase CheD (Sinorhizobium medicae (strain WSM419) (Ensifer medicae)).